The primary structure comprises 502 residues: T-complex protein 11-like X-linked protein 2 (502 aa).

Positions 1 to 36 (MPKTEETVLQNDPSVAENGAPEPKTPGQSQKSKSFC) are disordered.

It belongs to the TCP11 family.

This chain is T-complex protein 11-like X-linked protein 2, found in Homo sapiens (Human).